The chain runs to 215 residues: MLQVYLVRHGESEWNAARRIQGQSDSPLTETGEHQARLVAQRVKSESITHIITSDLGRTRRTAEIIAKVCGCEIILEPRLRELHMGVLERRNIDSLTSEEEKWRKKVLDGTPGGRIPKGESMDELAVRMRAALENCRNLPVGSRPLLVSHGIALGCLVGTILGLPAHAERRLRLRNCSLSRVDYQHSPWLASGWIVETAGDITHLDTPALDELQR.

Substrate is bound by residues 8–15, 21–22, arginine 58, arginine 60, 82–85, and 151–152; these read RHGESEWN, QG, ELHM, and GI. The active-site Tele-phosphohistidine intermediate is histidine 9. Residue glutamate 82 is the Proton donor/acceptor of the active site.

The protein belongs to the phosphoglycerate mutase family. GpmB subfamily.

It carries out the reaction (2R)-2-phosphoglycerate = (2R)-3-phosphoglycerate. It participates in carbohydrate degradation; glycolysis; pyruvate from D-glyceraldehyde 3-phosphate: step 3/5. This is Probable phosphoglycerate mutase GpmB from Photorhabdus laumondii subsp. laumondii (strain DSM 15139 / CIP 105565 / TT01) (Photorhabdus luminescens subsp. laumondii).